A 349-amino-acid chain; its full sequence is MDLIHTFLNLVAPPFTFFFLCLFLPPYWGLKFMVSILSWLLSENVAGKVVHITGASSGIGEYLAYEYAKRGACLALSARRETALHQVADTARHLGSPDVIVMRADVSKPEDCMRLIDQTVNHFGRLDHLVNNAAISIATLFEETPDISNLRPIMETNFWGSVYTTRYALQHLRKSRGKIVVMSSVDSWLPAPRRHIYSASKAALVSLYETLRVEVGSEIGITIVTPGYIESEITKGKFLSAQGEVDVDQDLRDVEVSAVPVGSVSGCAESIIKSTLRGDRCLTVPSWFRMTYLIKLLCPELLEWTFRLLYLTAPGTPTSDALSKKILDATGAKNLFYPPSIQSPDVKTD.

The chain crosses the membrane as a helical; Signal-anchor for type II membrane protein span at residues 10 to 30 (LVAPPFTFFFLCLFLPPYWGL). Residues 13-26 (PPFTFFFLCLFLPP) carry the Proline-knob motif. NADP(+)-binding positions include 54–80 (GASS…SARR), D105, and 132–135 (NAAI). S184 contributes to the substrate binding site. Y197 functions as the Proton acceptor in the catalytic mechanism. NADP(+) contacts are provided by residues 197-201 (YSASK) and K201.

This sequence belongs to the short-chain dehydrogenases/reductases (SDR) family. Expressed in seeds (at protein level).

It is found in the lipid droplet. The protein resides in the membrane. It catalyses the reaction an 11beta-hydroxysteroid + NADP(+) = an 11-oxosteroid + NADPH + H(+). Its function is as follows. Has dehydrogenase activity against 11 beta-hydroxysteroid and 17 beta-hydroxysteroid. May be involved in signal transduction regulated by various sterols. The chain is 11-beta-hydroxysteroid dehydrogenase A from Arachis hypogaea (Peanut).